The sequence spans 508 residues: Lysine--tRNA ligase (508 aa).

E416 and E423 together coordinate Mg(2+).

Belongs to the class-II aminoacyl-tRNA synthetase family. As to quaternary structure, homodimer. The cofactor is Mg(2+).

The protein localises to the cytoplasm. It catalyses the reaction tRNA(Lys) + L-lysine + ATP = L-lysyl-tRNA(Lys) + AMP + diphosphate. This chain is Lysine--tRNA ligase, found in Prochlorococcus marinus (strain MIT 9303).